Reading from the N-terminus, the 201-residue chain is Peptide deformylase (201 aa).

Residues 1–24 (MANHFSQLAKKSKTNGNSEKIAKE) are disordered. The Fe cation site is built by cysteine 121 and histidine 163. The active site involves glutamate 164. Histidine 167 lines the Fe cation pocket.

This sequence belongs to the polypeptide deformylase family. It depends on Fe(2+) as a cofactor.

It carries out the reaction N-terminal N-formyl-L-methionyl-[peptide] + H2O = N-terminal L-methionyl-[peptide] + formate. Functionally, removes the formyl group from the N-terminal Met of newly synthesized proteins. Requires at least a dipeptide for an efficient rate of reaction. N-terminal L-methionine is a prerequisite for activity but the enzyme has broad specificity at other positions. The polypeptide is Peptide deformylase (Prochlorococcus marinus (strain MIT 9312)).